Consider the following 697-residue polypeptide: Elongation factor G 2 (697 aa).

The 276-residue stretch at 5-280 (SLYRNIGIFA…AVVDYLPSPT (276 aa)) folds into the tr-type G domain. GTP-binding positions include 14 to 21 (AHVDAGKT), 78 to 82 (DTPGH), and 132 to 135 (NKLD).

The protein belongs to the TRAFAC class translation factor GTPase superfamily. Classic translation factor GTPase family. EF-G/EF-2 subfamily.

The protein localises to the cytoplasm. Functionally, catalyzes the GTP-dependent ribosomal translocation step during translation elongation. During this step, the ribosome changes from the pre-translocational (PRE) to the post-translocational (POST) state as the newly formed A-site-bound peptidyl-tRNA and P-site-bound deacylated tRNA move to the P and E sites, respectively. Catalyzes the coordinated movement of the two tRNA molecules, the mRNA and conformational changes in the ribosome. This chain is Elongation factor G 2, found in Saccharophagus degradans (strain 2-40 / ATCC 43961 / DSM 17024).